We begin with the raw amino-acid sequence, 145 residues long: Large ribosomal subunit protein uL13 (145 aa).

Belongs to the universal ribosomal protein uL13 family. In terms of assembly, part of the 50S ribosomal subunit.

Functionally, this protein is one of the early assembly proteins of the 50S ribosomal subunit, although it is not seen to bind rRNA by itself. It is important during the early stages of 50S assembly. The chain is Large ribosomal subunit protein uL13 from Bacillus pumilus (strain SAFR-032).